Here is a 169-residue protein sequence, read N- to C-terminus: MMPFDIRVGQGYDVHALVPGRKLILGGVHIPHDRGLLGHSDADALLHAITDALFGAAGLGDIGRHFPDTDAQFAGADSRVLLREAARRVREAGYEIGNVDASVIAQQPKLAPHIPGMVANIADDLGLPATRCNVKAKTNEKLGFEGRQEGIVAQAAVLIWRGAIADAQD.

Residues D13 and H15 each contribute to the a divalent metal cation site. Residues 13-15 (DVH) and 39-40 (HS) contribute to the 4-CDP-2-C-methyl-D-erythritol 2-phosphate site. Residue H47 coordinates a divalent metal cation. 4-CDP-2-C-methyl-D-erythritol 2-phosphate is bound by residues 61–63 (DIG), 66–70 (FPDTD), F144, and R147.

The protein belongs to the IspF family. Homotrimer. A divalent metal cation serves as cofactor.

The enzyme catalyses 4-CDP-2-C-methyl-D-erythritol 2-phosphate = 2-C-methyl-D-erythritol 2,4-cyclic diphosphate + CMP. It participates in isoprenoid biosynthesis; isopentenyl diphosphate biosynthesis via DXP pathway; isopentenyl diphosphate from 1-deoxy-D-xylulose 5-phosphate: step 4/6. Its function is as follows. Involved in the biosynthesis of isopentenyl diphosphate (IPP) and dimethylallyl diphosphate (DMAPP), two major building blocks of isoprenoid compounds. Catalyzes the conversion of 4-diphosphocytidyl-2-C-methyl-D-erythritol 2-phosphate (CDP-ME2P) to 2-C-methyl-D-erythritol 2,4-cyclodiphosphate (ME-CPP) with a corresponding release of cytidine 5-monophosphate (CMP). The chain is 2-C-methyl-D-erythritol 2,4-cyclodiphosphate synthase from Cupriavidus pinatubonensis (strain JMP 134 / LMG 1197) (Cupriavidus necator (strain JMP 134)).